Here is a 1120-residue protein sequence, read N- to C-terminus: Prophage side tail fiber protein homolog StfR (1120 aa).

3 disordered regions span residues 129 to 154 (KSAS…SARA), 221 to 442 (SAST…ATRA), and 960 to 1021 (SGRA…AGAH). Composition is skewed to low complexity over residues 221–239 (SAST…ARDA), 248–395 (SSET…SASA), and 402–442 (RQAS…ATRA). Over residues 985–1021 (DLGTKTTSSFDYGTKSTNNTGAHTHSVSGSTNSAGAH) the composition is skewed to polar residues.

This sequence belongs to the tail fiber family.

In Escherichia coli (strain K12), this protein is Prophage side tail fiber protein homolog StfR (stfR).